Consider the following 443-residue polypeptide: Signal recognition particle 54 kDa protein (443 aa).

Residues 104-111 (GLQGSGKT), 184-188 (DTAGR), and 242-245 (TKLD) contribute to the GTP site.

This sequence belongs to the GTP-binding SRP family. SRP54 subfamily. Part of the signal recognition particle protein translocation system, which is composed of SRP and FtsY. Archaeal SRP consists of a 7S RNA molecule of 300 nucleotides and two protein subunits: SRP54 and SRP19.

It localises to the cytoplasm. It carries out the reaction GTP + H2O = GDP + phosphate + H(+). Functionally, involved in targeting and insertion of nascent membrane proteins into the cytoplasmic membrane. Binds to the hydrophobic signal sequence of the ribosome-nascent chain (RNC) as it emerges from the ribosomes. The SRP-RNC complex is then targeted to the cytoplasmic membrane where it interacts with the SRP receptor FtsY. This is Signal recognition particle 54 kDa protein from Methanosarcina barkeri (strain Fusaro / DSM 804).